The sequence spans 447 residues: NADH peroxidase (447 aa).

Residues 7-11 (GSSHG), glutamate 32, cysteine 42, 110-113 (SPGA), and arginine 132 each bind FAD. Histidine 10 serves as the catalytic Proton acceptor. The Redox-active role is filled by cysteine 42. Cysteine 42 bears the Cysteine sulfenic acid (-SOH) mark. Residues isoleucine 160, aspartate 179, tyrosine 188, and glycine 243 each coordinate NAD(+). Position 281 (aspartate 281) interacts with FAD. Alanine 297 provides a ligand contact to NAD(+). Alanine 299 contacts FAD. Glycine 328 is a binding site for NAD(+).

This sequence belongs to the class-III pyridine nucleotide-disulfide oxidoreductase family. Homotetramer. The cofactor is FAD.

It catalyses the reaction H2O2 + NADH + H(+) = NAD(+) + 2 H2O. Peroxidase whose active site is a redox-active cysteine-sulfenic acid. This is NADH peroxidase (npr) from Enterococcus faecalis (strain ATCC 700802 / V583).